Reading from the N-terminus, the 516-residue chain is Effector protein hopAB1 (516 aa).

Disordered stretches follow at residues 1–93 (MSGI…AQPA) and 175–259 (RALA…DEAL). Over residues 16–30 (WRADDEPVTERERDS) the composition is skewed to basic and acidic residues. Residues 31 to 41 (SSGANLTNSPQ) show a composition bias toward polar residues. Pro residues predominate over residues 81–90 (PVEPRQPPEA). Composition is skewed to low complexity over residues 183-196 (PAPS…SRSS) and 212-224 (QTSS…SSTS).

This sequence belongs to the HopAB family.

It is found in the secreted. Functionally, effector protein that plays different roles depending on the species and plant cultivars that interact with the pathogen. Acts as a virulence determinant by enhancing the development of disease symptoms and bacterial growth. Acts as an avirulence factor by eliciting hypersensitive response (HR) and plant resistance. The chain is Effector protein hopAB1 (hopAB1) from Pseudomonas syringae pv. syringae (strain B728a).